The chain runs to 123 residues: Small ribosomal subunit protein uS12 (123 aa).

Residue D89 is modified to 3-methylthioaspartic acid.

It belongs to the universal ribosomal protein uS12 family. Part of the 30S ribosomal subunit. Contacts proteins S8 and S17. May interact with IF1 in the 30S initiation complex.

With S4 and S5 plays an important role in translational accuracy. Its function is as follows. Interacts with and stabilizes bases of the 16S rRNA that are involved in tRNA selection in the A site and with the mRNA backbone. Located at the interface of the 30S and 50S subunits, it traverses the body of the 30S subunit contacting proteins on the other side and probably holding the rRNA structure together. The combined cluster of proteins S8, S12 and S17 appears to hold together the shoulder and platform of the 30S subunit. In Prochlorococcus marinus (strain MIT 9211), this protein is Small ribosomal subunit protein uS12.